The sequence spans 260 residues: ATP synthase subunit a (260 aa).

The next 7 membrane-spanning stretches (helical) occupy residues 29-49 (FSFT…LLLI), 95-115 (FFPC…QGMI), 124-144 (HFLI…IVGF), 151-171 (FFSF…LVLL), 191-211 (MMAG…MLCM), 213-233 (EIFY…LTGL), and 237-257 (VAIL…NDAI).

Belongs to the ATPase A chain family. In terms of assembly, F-type ATPases have 2 components, CF(1) - the catalytic core - and CF(0) - the membrane proton channel. CF(1) has five subunits: alpha(3), beta(3), gamma(1), delta(1), epsilon(1). CF(0) has three main subunits: a, b and c.

Its subcellular location is the mitochondrion inner membrane. Functionally, mitochondrial membrane ATP synthase (F(1)F(0) ATP synthase or Complex V) produces ATP from ADP in the presence of a proton gradient across the membrane which is generated by electron transport complexes of the respiratory chain. F-type ATPases consist of two structural domains, F(1) - containing the extramembraneous catalytic core and F(0) - containing the membrane proton channel, linked together by a central stalk and a peripheral stalk. During catalysis, ATP synthesis in the catalytic domain of F(1) is coupled via a rotary mechanism of the central stalk subunits to proton translocation. Key component of the proton channel; it may play a direct role in the translocation of protons across the membrane. This is ATP synthase subunit a (ATP6) from Brassica napus (Rape).